A 133-amino-acid chain; its full sequence is Large-conductance mechanosensitive channel (133 aa).

2 helical membrane passes run 14 to 34 and 73 to 93; these read VVDL…VTTL and FITV…MVVV.

Belongs to the MscL family. In terms of assembly, homopentamer.

It is found in the cell membrane. Its function is as follows. Channel that opens in response to stretch forces in the membrane lipid bilayer. May participate in the regulation of osmotic pressure changes within the cell. This is Large-conductance mechanosensitive channel from Renibacterium salmoninarum (strain ATCC 33209 / DSM 20767 / JCM 11484 / NBRC 15589 / NCIMB 2235).